The following is a 521-amino-acid chain: MKLTFDLDGKIIFSKELSEEAKNAVEEVLKNADSIFLKGVPKGKENEASKIKSYEFEGNILKLKIASGTYTRAHEGLIRLRKPLAEKLGRNFRIGVRGIEIDNYVITIETDEDKAKKLEGIKVPECEAKVEGNKIILTFKDIGESELKRNIIDRAIKFVKTELEKEEEDLTFKVCKIPPGTIVSEYKAKRKITFDKDPTDVAEKLGWVKKFPGRGQWFYTPPITALFRALEELIVEEVVKKIGFQECLFPKLIPLEIMYKMRYLEGLPEGMYYVCPPKREPELFKEFVNEMMIKKEIPIEKLKNLLRDPGYVLAPAQCEPFYQFFEGEVIDVDKPIMFFDRSGWTYRWEGGGARGLDRVNEFLRVECVWIGSPEFVEETRDKTLKYAEKLAEKLDLEYWVEVGDDPFYLEGRKKEDRGIEFPDVPKYEMRLWLPHIKDERKGVAVTSANVHGTHFVEGFRIKDYKGRRVWTGCTGYGITRWVVGYLAQYGFNFDDWHPIIKKKIKKLPEVPQLITWPKKDE.

Residue alanine 316 coordinates L-serine. Cysteine 318 contacts Zn(2+). Residue arginine 347 participates in L-serine binding. ATP is bound by residues 347-349 and 358-359; these read RWE and RV. Residue 364–366 coordinates L-serine; that stretch reads RVE. Glutamate 366 and cysteine 473 together coordinate Zn(2+). Arginine 480 contributes to the ATP binding site.

It belongs to the class-II aminoacyl-tRNA synthetase family. Type-2 seryl-tRNA synthetase subfamily. As to quaternary structure, homodimer. Requires Zn(2+) as cofactor.

The protein resides in the cytoplasm. It carries out the reaction tRNA(Ser) + L-serine + ATP = L-seryl-tRNA(Ser) + AMP + diphosphate + H(+). The catalysed reaction is tRNA(Sec) + L-serine + ATP = L-seryl-tRNA(Sec) + AMP + diphosphate + H(+). Its pathway is aminoacyl-tRNA biosynthesis; selenocysteinyl-tRNA(Sec) biosynthesis; L-seryl-tRNA(Sec) from L-serine and tRNA(Sec): step 1/1. Its function is as follows. Catalyzes the attachment of serine to tRNA(Ser). Is also able to aminoacylate tRNA(Sec) with serine, to form the misacylated tRNA L-seryl-tRNA(Sec), which will be further converted into selenocysteinyl-tRNA(Sec). This Methanocaldococcus jannaschii (strain ATCC 43067 / DSM 2661 / JAL-1 / JCM 10045 / NBRC 100440) (Methanococcus jannaschii) protein is Type-2 serine--tRNA ligase (serS).